The following is a 523-amino-acid chain: Frizzled-2 (523 aa).

In terms of domain architecture, FZ spans proline 1 to glutamine 120. The Extracellular segment spans residues proline 1 to tryptophan 205. 5 disulfide bridges follow: cysteine 6/cysteine 67, cysteine 14/cysteine 60, cysteine 51/cysteine 88, cysteine 77/cysteine 117, and cysteine 81/cysteine 105. An N-linked (GlcNAc...) asparagine glycan is attached at asparagine 20. Asparagine 121 carries an N-linked (GlcNAc...) asparagine glycan. The helical transmembrane segment at isoleucine 206–valine 226 threads the bilayer. Residues aspartate 227–proline 237 lie on the Cytoplasmic side of the membrane. A helical membrane pass occupies residues isoleucine 238–leucine 258. Topologically, residues glutamate 259 to cysteine 285 are extracellular. The chain crosses the membrane as a helical span at residues threonine 286–leucine 306. The Cytoplasmic segment spans residues serine 307–glutamine 328. The helical transmembrane segment at tyrosine 329 to glycine 349 threads the bilayer. Over glutamine 350–glycine 372 the chain is Extracellular. Residues phenylalanine 373 to phenylalanine 393 traverse the membrane as a helical segment. Topologically, residues valine 394–arginine 419 are cytoplasmic. Residues isoleucine 420–tyrosine 440 traverse the membrane as a helical segment. The Extracellular portion of the chain corresponds to glutamate 441–threonine 477. Residues valine 478 to phenylalanine 498 form a helical membrane-spanning segment. The Cytoplasmic portion of the chain corresponds to serine 499–valine 523. A Lys-Thr-X-X-X-Trp motif, mediates interaction with the PDZ domain of Dvl family members motif is present at residues lysine 501–tryptophan 506. The short motif at threonine 521 to valine 523 is the PDZ-binding element.

The protein belongs to the G-protein coupled receptor Fz/Smo family. In terms of tissue distribution, expressed in the developing head and limbs. Expressed broadly in cranial ectoderm. Also expressed in the developing somites (dermomyotome) and in other cranial placodes, including the olfactory, lens, and otic placodes (rostral rim of the vesicle).

It localises to the membrane. The protein localises to the cell membrane. Functionally, receptor for Wnt proteins. Most of frizzled receptors are coupled to the beta-catenin canonical signaling pathway, which leads to the activation of disheveled proteins, inhibition of GSK-3 kinase, nuclear accumulation of beta-catenin and activation of Wnt target genes. A second signaling pathway involving PKC and calcium fluxes has been seen for some family members, but it is not yet clear if it represents a distinct pathway or if it can be integrated in the canonical pathway, as PKC seems to be required for Wnt-mediated inactivation of GSK-3 kinase. Both pathways seem to involve interactions with G-proteins. May be involved in transduction and intercellular transmission of polarity information during tissue morphogenesis and/or in differentiated tissues. In Gallus gallus (Chicken), this protein is Frizzled-2 (FZD2).